The sequence spans 188 residues: Cytochrome c oxidase assembly protein CtaG (188 aa).

The Cytoplasmic portion of the chain corresponds to 1–8 (MSKKSNKN). A helical; Signal-anchor for type II membrane protein membrane pass occupies residues 9 to 31 (LAFSLLGLIISMVLLSFASVPIY). Topologically, residues 32–188 (NLFCKVTGYG…SSLRGNYVSN (157 aa)) are periplasmic.

Belongs to the COX11/CtaG family.

Its subcellular location is the cell inner membrane. Functionally, exerts its effect at some terminal stage of cytochrome c oxidase synthesis, probably by being involved in the insertion of the copper B into subunit I. This is Cytochrome c oxidase assembly protein CtaG from Rickettsia conorii (strain ATCC VR-613 / Malish 7).